A 162-amino-acid polypeptide reads, in one-letter code: 2-C-methyl-D-erythritol 2,4-cyclodiphosphate synthase (162 aa).

D10 and H12 together coordinate a divalent metal cation. Residues 10–12 (DVH) and 36–37 (HS) each bind 4-CDP-2-C-methyl-D-erythritol 2-phosphate. An a divalent metal cation-binding site is contributed by H44. 4-CDP-2-C-methyl-D-erythritol 2-phosphate is bound by residues 58–60 (DIG), 63–67 (FPDTD), 102–108 (AQAPRMA), 134–137 (TTSE), F141, and R144.

It belongs to the IspF family. Homotrimer. A divalent metal cation serves as cofactor.

It catalyses the reaction 4-CDP-2-C-methyl-D-erythritol 2-phosphate = 2-C-methyl-D-erythritol 2,4-cyclic diphosphate + CMP. Its pathway is isoprenoid biosynthesis; isopentenyl diphosphate biosynthesis via DXP pathway; isopentenyl diphosphate from 1-deoxy-D-xylulose 5-phosphate: step 4/6. Functionally, involved in the biosynthesis of isopentenyl diphosphate (IPP) and dimethylallyl diphosphate (DMAPP), two major building blocks of isoprenoid compounds. Catalyzes the conversion of 4-diphosphocytidyl-2-C-methyl-D-erythritol 2-phosphate (CDP-ME2P) to 2-C-methyl-D-erythritol 2,4-cyclodiphosphate (ME-CPP) with a corresponding release of cytidine 5-monophosphate (CMP). This is 2-C-methyl-D-erythritol 2,4-cyclodiphosphate synthase from Chromohalobacter salexigens (strain ATCC BAA-138 / DSM 3043 / CIP 106854 / NCIMB 13768 / 1H11).